The sequence spans 71 residues: Large ribosomal subunit protein bL31 (71 aa).

Positions 16, 18, 36, and 39 each coordinate Zn(2+).

The protein belongs to the bacterial ribosomal protein bL31 family. Type A subfamily. As to quaternary structure, part of the 50S ribosomal subunit. Zn(2+) serves as cofactor.

Functionally, binds the 23S rRNA. This is Large ribosomal subunit protein bL31 from Thermotoga maritima (strain ATCC 43589 / DSM 3109 / JCM 10099 / NBRC 100826 / MSB8).